The sequence spans 201 residues: Holliday junction branch migration complex subunit RuvA (201 aa).

The segment at 1-64 (MYEYIRGQFQ…EDFIGLYGFT (64 aa)) is domain I. Residues 65–143 (TREELEMFKL…PDELTSEEGE (79 aa)) form a domain II region. The interval 144-152 (LIEGINDNS) is flexible linker. Residues 153–201 (DYSFNINETLSALMALGYTEKEAQKALEKVDKTLSIENMIKESLKLLMR) are domain III.

It belongs to the RuvA family. Homotetramer. Forms an RuvA(8)-RuvB(12)-Holliday junction (HJ) complex. HJ DNA is sandwiched between 2 RuvA tetramers; dsDNA enters through RuvA and exits via RuvB. An RuvB hexamer assembles on each DNA strand where it exits the tetramer. Each RuvB hexamer is contacted by two RuvA subunits (via domain III) on 2 adjacent RuvB subunits; this complex drives branch migration. In the full resolvosome a probable DNA-RuvA(4)-RuvB(12)-RuvC(2) complex forms which resolves the HJ.

The protein localises to the cytoplasm. In terms of biological role, the RuvA-RuvB-RuvC complex processes Holliday junction (HJ) DNA during genetic recombination and DNA repair, while the RuvA-RuvB complex plays an important role in the rescue of blocked DNA replication forks via replication fork reversal (RFR). RuvA specifically binds to HJ cruciform DNA, conferring on it an open structure. The RuvB hexamer acts as an ATP-dependent pump, pulling dsDNA into and through the RuvAB complex. HJ branch migration allows RuvC to scan DNA until it finds its consensus sequence, where it cleaves and resolves the cruciform DNA. This Clostridium perfringens (strain ATCC 13124 / DSM 756 / JCM 1290 / NCIMB 6125 / NCTC 8237 / Type A) protein is Holliday junction branch migration complex subunit RuvA.